The primary structure comprises 359 residues: tRNA/tmRNA (uracil-C(5))-methyltransferase (359 aa).

S-adenosyl-L-methionine is bound by residues Q183, Y211, N216, E232, and D292. The active-site Nucleophile is the C317. E351 functions as the Proton acceptor in the catalytic mechanism.

The protein belongs to the class I-like SAM-binding methyltransferase superfamily. RNA M5U methyltransferase family. TrmA subfamily.

The catalysed reaction is uridine(54) in tRNA + S-adenosyl-L-methionine = 5-methyluridine(54) in tRNA + S-adenosyl-L-homocysteine + H(+). It catalyses the reaction uridine(341) in tmRNA + S-adenosyl-L-methionine = 5-methyluridine(341) in tmRNA + S-adenosyl-L-homocysteine + H(+). Its function is as follows. Dual-specificity methyltransferase that catalyzes the formation of 5-methyluridine at position 54 (m5U54) in all tRNAs, and that of position 341 (m5U341) in tmRNA (transfer-mRNA). The sequence is that of tRNA/tmRNA (uracil-C(5))-methyltransferase from Pseudomonas fluorescens (strain ATCC BAA-477 / NRRL B-23932 / Pf-5).